The chain runs to 450 residues: Phosphoglucosamine mutase (450 aa).

The active-site Phosphoserine intermediate is the Ser101. Residues Ser101, Asp240, Asp242, and Asp244 each coordinate Mg(2+). Phosphoserine is present on Ser101.

This sequence belongs to the phosphohexose mutase family. Mg(2+) is required as a cofactor. Activated by phosphorylation.

The catalysed reaction is alpha-D-glucosamine 1-phosphate = D-glucosamine 6-phosphate. In terms of biological role, catalyzes the conversion of glucosamine-6-phosphate to glucosamine-1-phosphate. The chain is Phosphoglucosamine mutase from Streptococcus gordonii (strain Challis / ATCC 35105 / BCRC 15272 / CH1 / DL1 / V288).